We begin with the raw amino-acid sequence, 245 residues long: 3-deoxy-manno-octulosonate cytidylyltransferase (245 aa).

Belongs to the KdsB family.

Its subcellular location is the cytoplasm. The enzyme catalyses 3-deoxy-alpha-D-manno-oct-2-ulosonate + CTP = CMP-3-deoxy-beta-D-manno-octulosonate + diphosphate. It functions in the pathway nucleotide-sugar biosynthesis; CMP-3-deoxy-D-manno-octulosonate biosynthesis; CMP-3-deoxy-D-manno-octulosonate from 3-deoxy-D-manno-octulosonate and CTP: step 1/1. Its pathway is bacterial outer membrane biogenesis; lipopolysaccharide biosynthesis. Functionally, activates KDO (a required 8-carbon sugar) for incorporation into bacterial lipopolysaccharide in Gram-negative bacteria. This is 3-deoxy-manno-octulosonate cytidylyltransferase from Elusimicrobium minutum (strain Pei191).